A 107-amino-acid polypeptide reads, in one-letter code: Nucleoid-associated protein HNE_0371 (107 aa).

The protein belongs to the YbaB/EbfC family. In terms of assembly, homodimer.

It localises to the cytoplasm. Its subcellular location is the nucleoid. Functionally, binds to DNA and alters its conformation. May be involved in regulation of gene expression, nucleoid organization and DNA protection. This Hyphomonas neptunium (strain ATCC 15444) protein is Nucleoid-associated protein HNE_0371.